The sequence spans 917 residues: Methionine--tRNA ligase, cytoplasmic (917 aa).

A 'HIGH' region motif is present at residues 44–54; it reads PYVNNVPHLGN. A 'KMSKS' region motif is present at residues 367 to 371; that stretch reads KFSKS. Lys-370 provides a ligand contact to ATP. Disordered stretches follow at residues 591-623 and 702-749; these read GSQD…GDKK and SCTP…AAAA. A compositionally biased stretch (basic and acidic residues) spans 614–623; it reads PTKDKKGDKK. The segment covering 702 to 713 has biased composition (low complexity); sequence SCTPTPTSTPAS. Residues 732–741 are compositionally biased toward basic and acidic residues; it reads EPKKAKEQKK. In terms of domain architecture, tRNA-binding spans 756–857; the sequence is DVGRLDMRVG…ADSKPGTPVV (102 aa).

This sequence belongs to the class-I aminoacyl-tRNA synthetase family.

Its subcellular location is the cytoplasm. The enzyme catalyses tRNA(Met) + L-methionine + ATP = L-methionyl-tRNA(Met) + AMP + diphosphate. This Caenorhabditis elegans protein is Methionine--tRNA ligase, cytoplasmic.